Here is a 294-residue protein sequence, read N- to C-terminus: Tryptophan 2,3-dioxygenase (294 aa).

The interval 1–20 (MSEFKGCPFSGAASEAGTKA) is disordered. Substrate-binding positions include 63 to 67 (FIVQH), Tyr125, and Arg129. His252 is a binding site for heme. A substrate-binding site is contributed by Thr266.

The protein belongs to the tryptophan 2,3-dioxygenase family. Homotetramer. It depends on heme as a cofactor.

It catalyses the reaction L-tryptophan + O2 = N-formyl-L-kynurenine. Its pathway is amino-acid degradation; L-tryptophan degradation via kynurenine pathway; L-kynurenine from L-tryptophan: step 1/2. In terms of biological role, heme-dependent dioxygenase that catalyzes the oxidative cleavage of the L-tryptophan (L-Trp) pyrrole ring and converts L-tryptophan to N-formyl-L-kynurenine. Catalyzes the oxidative cleavage of the indole moiety. The polypeptide is Tryptophan 2,3-dioxygenase (Cupriavidus necator (strain ATCC 17699 / DSM 428 / KCTC 22496 / NCIMB 10442 / H16 / Stanier 337) (Ralstonia eutropha)).